The chain runs to 451 residues: MGRRYFGTDGIRGTVGEAPITPDFVLRLGYAAGKVLAGSADVAAGSRPTVLIGKDTRVSGYMLEAALEAGFSAAGVDVMLAGPMPTPGVAYLTRALRLSAGVVISASHNPYHDNGIKFFSADGNKLPDDTEAAIEAWLDKPLECAPSDGLGKARRLDDAAGRYIEFCKSTFPAAFDLRGLKLVIDCAHGAAYQIAPHVFHELGADVIPIGVAPNGFNINDGVGATAPDALVRAVRANHADLGIALDGDADRLQVVDATGRLYNGDELLYVLVKDRIATDGKVDGAVGTLMTNLAVEVALQREGVKFVRAAVGDRYVLEQLREHGWQLGAEGSGHILSLDRHSTGDGIVSALLVLAALKRSGRTLAQVLDGVTLFPQKLINVRMKPGADWKGSASIRAAIDAAEAALAGSGRVLIRASGTEPVLRVMVEAQQAADAVRHAETIADAVRAATT.

Ser-107 serves as the catalytic Phosphoserine intermediate. Mg(2+) is bound by residues Ser-107, Asp-246, Asp-248, and Asp-250. A Phosphoserine modification is found at Ser-107.

It belongs to the phosphohexose mutase family. Requires Mg(2+) as cofactor. Activated by phosphorylation.

It carries out the reaction alpha-D-glucosamine 1-phosphate = D-glucosamine 6-phosphate. In terms of biological role, catalyzes the conversion of glucosamine-6-phosphate to glucosamine-1-phosphate. In Burkholderia cenocepacia (strain HI2424), this protein is Phosphoglucosamine mutase.